We begin with the raw amino-acid sequence, 142 residues long: Large ribosomal subunit protein uL13 (142 aa).

This sequence belongs to the universal ribosomal protein uL13 family. As to quaternary structure, part of the 50S ribosomal subunit.

In terms of biological role, this protein is one of the early assembly proteins of the 50S ribosomal subunit, although it is not seen to bind rRNA by itself. It is important during the early stages of 50S assembly. This is Large ribosomal subunit protein uL13 from Xanthomonas oryzae pv. oryzae (strain MAFF 311018).